Here is a 150-residue protein sequence, read N- to C-terminus: uncharacterized protein (150 aa).

A run of 5 repeats spans residues 101-105, 106-110, 111-115, 116-120, and 121-125. Residues 101–125 form a 5 X 5 AA tandem repeats of [FH]-H-[EK]-[IV]-N region; sequence FHEVNHHEVNHHKINHHEVNHHKIN.

This sequence belongs to the asfivirus D129L family.

This is an uncharacterized protein from African swine fever virus (isolate Tick/Malawi/Lil 20-1/1983) (ASFV).